The sequence spans 305 residues: Lipoyl synthase (305 aa).

[4Fe-4S] cluster contacts are provided by Cys41, Cys46, Cys52, Cys68, Cys72, Cys75, and Ser281. The Radical SAM core domain maps to 54-270 (GARRTATFMI…RKVAMDKGFK (217 aa)). Basic and acidic residues predominate over residues 283 to 298 (HADEQVNEAAKEKQRQ). The disordered stretch occupies residues 283–305 (HADEQVNEAAKEKQRQGEAQLNS).

The protein belongs to the radical SAM superfamily. Lipoyl synthase family. It depends on [4Fe-4S] cluster as a cofactor.

The protein localises to the cytoplasm. The catalysed reaction is [[Fe-S] cluster scaffold protein carrying a second [4Fe-4S](2+) cluster] + N(6)-octanoyl-L-lysyl-[protein] + 2 oxidized [2Fe-2S]-[ferredoxin] + 2 S-adenosyl-L-methionine + 4 H(+) = [[Fe-S] cluster scaffold protein] + N(6)-[(R)-dihydrolipoyl]-L-lysyl-[protein] + 4 Fe(3+) + 2 hydrogen sulfide + 2 5'-deoxyadenosine + 2 L-methionine + 2 reduced [2Fe-2S]-[ferredoxin]. The protein operates within protein modification; protein lipoylation via endogenous pathway; protein N(6)-(lipoyl)lysine from octanoyl-[acyl-carrier-protein]. In terms of biological role, catalyzes the radical-mediated insertion of two sulfur atoms into the C-6 and C-8 positions of the octanoyl moiety bound to the lipoyl domains of lipoate-dependent enzymes, thereby converting the octanoylated domains into lipoylated derivatives. This is Lipoyl synthase from Staphylococcus aureus (strain Mu3 / ATCC 700698).